The following is a 256-amino-acid chain: Small ribosomal subunit protein uS2 (256 aa).

It belongs to the universal ribosomal protein uS2 family.

This is Small ribosomal subunit protein uS2 from Brucella abortus (strain S19).